A 114-amino-acid chain; its full sequence is Phosphoribosyl-ATP pyrophosphatase (114 aa).

This sequence belongs to the PRA-PH family.

The protein localises to the cytoplasm. The enzyme catalyses 1-(5-phospho-beta-D-ribosyl)-ATP + H2O = 1-(5-phospho-beta-D-ribosyl)-5'-AMP + diphosphate + H(+). The protein operates within amino-acid biosynthesis; L-histidine biosynthesis; L-histidine from 5-phospho-alpha-D-ribose 1-diphosphate: step 2/9. The sequence is that of Phosphoribosyl-ATP pyrophosphatase from Leuconostoc mesenteroides subsp. mesenteroides (strain ATCC 8293 / DSM 20343 / BCRC 11652 / CCM 1803 / JCM 6124 / NCDO 523 / NBRC 100496 / NCIMB 8023 / NCTC 12954 / NRRL B-1118 / 37Y).